The following is a 682-amino-acid chain: Penicillin-binding protein activator LpoA (682 aa).

The N-terminal stretch at 1-26 is a signal peptide; it reads MLPLNSVRTHAGRLVPVMLAALFLAG. The N-palmitoyl cysteine moiety is linked to residue C27. C27 carries the S-diacylglycerol cysteine lipid modification. Disordered regions lie at residues 240 to 262 and 314 to 341; these read AKQLPSQLGGTPPAAAAPTTGET and ANNAAAATPGAPAVPSPASSTPSAVSPT. Low complexity predominate over residues 248–262; that stretch reads GGTPPAAAAPTTGET.

This sequence belongs to the LpoA family. As to quaternary structure, interacts with PBP1a.

The protein localises to the cell outer membrane. In terms of biological role, regulator of peptidoglycan synthesis that is essential for the function of penicillin-binding protein 1A (PBP1a). The chain is Penicillin-binding protein activator LpoA from Dickeya chrysanthemi (strain Ech1591) (Dickeya zeae (strain Ech1591)).